Reading from the N-terminus, the 952-residue chain is Glycine dehydrogenase (decarboxylating) (952 aa).

K703 is modified (N6-(pyridoxal phosphate)lysine).

It belongs to the GcvP family. In terms of assembly, the glycine cleavage system is composed of four proteins: P, T, L and H. The cofactor is pyridoxal 5'-phosphate.

The catalysed reaction is N(6)-[(R)-lipoyl]-L-lysyl-[glycine-cleavage complex H protein] + glycine + H(+) = N(6)-[(R)-S(8)-aminomethyldihydrolipoyl]-L-lysyl-[glycine-cleavage complex H protein] + CO2. The glycine cleavage system catalyzes the degradation of glycine. The P protein binds the alpha-amino group of glycine through its pyridoxal phosphate cofactor; CO(2) is released and the remaining methylamine moiety is then transferred to the lipoamide cofactor of the H protein. This Mycolicibacterium gilvum (strain PYR-GCK) (Mycobacterium gilvum (strain PYR-GCK)) protein is Glycine dehydrogenase (decarboxylating).